The sequence spans 217 residues: Ras-like protein (217 aa).

17-24 (GGGGVGKS) serves as a coordination point for GTP. Residues 39 to 47 (YDPTIEDSY) carry the Effector region motif. GTP contacts are provided by residues 64-68 (DTAGQ) and 123-126 (NKCD). Positions 181-200 (TGRMMTGGGGGGPPGTYAGK) are disordered. Residues 185–194 (MTGGGGGGPP) are compositionally biased toward gly residues. Residues cysteine 210 and cysteine 211 are each lipidated (S-palmitoyl cysteine). Cysteine 214 is modified (cysteine methyl ester). Residue cysteine 214 is the site of S-geranylgeranyl cysteine attachment. The propeptide at 215–217 (VVL) is removed in mature form.

It belongs to the small GTPase superfamily. Ras family.

The protein resides in the cell membrane. It catalyses the reaction GTP + H2O = GDP + phosphate + H(+). Its activity is regulated as follows. Alternates between an inactive form bound to GDP and an active form bound to GTP. Activated by a guanine nucleotide-exchange factor (GEF) and inactivated by a GTPase-activating protein (GAP). This is Ras-like protein from Lentinula edodes (Shiitake mushroom).